The primary structure comprises 329 residues: UDP-glucose 4-epimerase (329 aa).

Residues 11 to 12 (YV), 31 to 36 (DNFSTG), 51 to 52 (DV), 71 to 75 (FAARS), threonine 115, tyrosine 139, lysine 143, and phenylalanine 167 contribute to the NAD(+) site. Substrate-binding residues include threonine 115 and tyrosine 139. Tyrosine 139 (proton acceptor) is an active-site residue. Residues asparagine 168, 185–186 (HL), 202–204 (FMF), arginine 217, and 277–280 (RAGD) contribute to the substrate site.

Belongs to the NAD(P)-dependent epimerase/dehydratase family. Homodimer. Requires NAD(+) as cofactor.

It carries out the reaction UDP-alpha-D-glucose = UDP-alpha-D-galactose. It participates in carbohydrate metabolism; galactose metabolism. In terms of biological role, involved in the metabolism of galactose. Catalyzes the conversion of UDP-galactose (UDP-Gal) to UDP-glucose (UDP-Glc) through a mechanism involving the transient reduction of NAD. The polypeptide is UDP-glucose 4-epimerase (galE) (Corynebacterium glutamicum (strain ATCC 13032 / DSM 20300 / JCM 1318 / BCRC 11384 / CCUG 27702 / LMG 3730 / NBRC 12168 / NCIMB 10025 / NRRL B-2784 / 534)).